The sequence spans 82 residues: Small ribosomal subunit protein bS16c (82 aa).

The protein belongs to the bacterial ribosomal protein bS16 family.

It is found in the plastid. The protein resides in the chloroplast. The protein is Small ribosomal subunit protein bS16c of Porphyra purpurea (Red seaweed).